The following is a 345-amino-acid chain: N-glycosylase/DNA lyase (345 aa).

DNA-binding residues include asparagine 149, arginine 154, and arginine 204. Lysine 249 (schiff-base intermediate with DNA) is an active-site residue. Positions 266 and 268 each coordinate 8-oxoguanine. Residues histidine 270 and glutamine 287 each contribute to the DNA site. Positions 315 and 319 each coordinate 8-oxoguanine. A compositionally biased stretch (basic and acidic residues) spans 324–334; that stretch reads RQSRHAQEPPA. A disordered region spans residues 324–345; the sequence is RQSRHAQEPPAKRRKGSKGPEG. The segment covering 335–345 has biased composition (basic residues); sequence KRRKGSKGPEG.

The protein belongs to the type-1 OGG1 family. Ubiquitous.

It localises to the nucleus. It is found in the nucleoplasm. The protein localises to the nucleus speckle. The protein resides in the nucleus matrix. Its subcellular location is the mitochondrion. The catalysed reaction is 2'-deoxyribonucleotide-(2'-deoxyribose 5'-phosphate)-2'-deoxyribonucleotide-DNA = a 3'-end 2'-deoxyribonucleotide-(2,3-dehydro-2,3-deoxyribose 5'-phosphate)-DNA + a 5'-end 5'-phospho-2'-deoxyribonucleoside-DNA + H(+). DNA repair enzyme that incises DNA at 8-oxoG residues. Excises 7,8-dihydro-8-oxoguanine and 2,6-diamino-4-hydroxy-5-N-methylformamidopyrimidine (FAPY) from damaged DNA. Has a beta-lyase activity that nicks DNA 3' to the lesion. The polypeptide is N-glycosylase/DNA lyase (OGG1) (Homo sapiens (Human)).